The sequence spans 339 residues: MVREEVAGSTQTLQWKCVESRVDSKRLYYGRFILSPLRKGQADTVGIALRRALLGEIEGTCIARAKFGSVPHEYSTIAGIEESVQEILLNLKEIVLRSNLYGVRDASICVKGPRYITAQDIILPPSVEIVDTAQPIANLTEPIDFCIDLQIKRDRGYQTELRKNYQDGSYPIDAVSMPVRNVNYSIFSCGNGNEKHEILFLEIWTNGSLTPKEALYEASRNLIDLFLPFLHAEEEGTSFEENKNRFTPPLFTFKKRLTNLKKNKKGIPLNCIFIDQLELTSRTYNCLKRANIHTLLDLLSKTEEDLMRIDSFRMEDRKHIWDTLEKHLPIDLLKNKLSF.

The interval 1–233 is alpha N-terminal domain (alpha-NTD); it reads MVREEVAGST…DLFLPFLHAE (233 aa). Residues 264 to 339 form an alpha C-terminal domain (alpha-CTD) region; it reads KKGIPLNCIF…IDLLKNKLSF (76 aa).

Belongs to the RNA polymerase alpha chain family. In terms of assembly, in plastids the minimal PEP RNA polymerase catalytic core is composed of four subunits: alpha, beta, beta', and beta''. When a (nuclear-encoded) sigma factor is associated with the core the holoenzyme is formed, which can initiate transcription.

It localises to the plastid. The protein resides in the chloroplast. It catalyses the reaction RNA(n) + a ribonucleoside 5'-triphosphate = RNA(n+1) + diphosphate. In terms of biological role, DNA-dependent RNA polymerase catalyzes the transcription of DNA into RNA using the four ribonucleoside triphosphates as substrates. This is DNA-directed RNA polymerase subunit alpha from Bromus inermis (Smooth brome grass).